Here is a 506-residue protein sequence, read N- to C-terminus: NAD(P)H-quinone oxidoreductase subunit 2 (506 aa).

13 consecutive transmembrane segments (helical) span residues 14-34 (AIIP…VDLA), 42-62 (WAPI…ALQW), 79-99 (LAIS…LISW), 108-128 (PIGE…LLCG), 132-152 (LISV…LSGY), 167-187 (LLVG…LYGL), 206-226 (FITS…IAAV), 240-260 (PTPV…AFAI), 276-296 (LLFT…ALAQ), 302-322 (MLAY…VSGT), 330-350 (VLYL…VILF), 374-394 (LGLS…GFFG), and 409-429 (LLVI…ISVI).

Belongs to the complex I subunit 2 family. As to quaternary structure, NDH-1 can be composed of about 15 different subunits; different subcomplexes with different compositions have been identified which probably have different functions.

The protein resides in the cellular thylakoid membrane. It carries out the reaction a plastoquinone + NADH + (n+1) H(+)(in) = a plastoquinol + NAD(+) + n H(+)(out). The catalysed reaction is a plastoquinone + NADPH + (n+1) H(+)(in) = a plastoquinol + NADP(+) + n H(+)(out). Its function is as follows. NDH-1 shuttles electrons from an unknown electron donor, via FMN and iron-sulfur (Fe-S) centers, to quinones in the respiratory and/or the photosynthetic chain. The immediate electron acceptor for the enzyme in this species is believed to be plastoquinone. Couples the redox reaction to proton translocation, and thus conserves the redox energy in a proton gradient. Cyanobacterial NDH-1 also plays a role in inorganic carbon-concentration. This is NAD(P)H-quinone oxidoreductase subunit 2 from Prochlorococcus marinus (strain MIT 9215).